Here is a 328-residue protein sequence, read N- to C-terminus: DNA repair and recombination protein RadA (328 aa).

118–125 lines the ATP pocket; sequence GEYGSGKT.

It belongs to the eukaryotic RecA-like protein family.

Involved in DNA repair and in homologous recombination. Binds and assemble on single-stranded DNA to form a nucleoprotein filament. Hydrolyzes ATP in a ssDNA-dependent manner and promotes DNA strand exchange between homologous DNA molecules. This Desulfurococcus amylolyticus (strain DSM 18924 / JCM 16383 / VKM B-2413 / 1221n) (Desulfurococcus kamchatkensis) protein is DNA repair and recombination protein RadA.